A 1284-amino-acid polypeptide reads, in one-letter code: Integrator complex subunit 6 (1284 aa).

The 132-residue stretch at 3-134 (IILFLVDTSS…PSVIIVITDG (132 aa)) folds into the VWFA domain. 4 disordered regions span residues 653-824 (DVAP…GMSN), 864-895 (ETGE…SPAV), 1053-1086 (TSSG…DDHA), and 1125-1180 (NNSS…PGQS). The segment covering 690 to 721 (SPGGGSGPGMPGMPGMGGGMSGLMLGAGGSGG) has biased composition (gly residues). Low complexity-rich tracts occupy residues 752 to 781 (DSRS…SSIS) and 803 to 824 (NSNS…GMSN). Over residues 879 to 890 (GASSANEPSSIG) the composition is skewed to polar residues. 2 stretches are compositionally biased toward low complexity: residues 1053–1074 (TSSG…NGST) and 1125–1141 (NNSS…LSNN). Over residues 1159–1171 (INSSCGSSPTHNN) the composition is skewed to polar residues.

It belongs to the Integrator subunit 6 family. In terms of assembly, belongs to the multiprotein complex Integrator, at least composed of IntS1, IntS2, IntS3, IntS4, omd/IntS5, IntS6, defl/IntS7, IntS8, IntS9, IntS10, IntS11, IntS12, asun/IntS13, IntS14 and IntS15. The core complex associates with protein phosphatase 2A subunits mts/PP2A and Pp2A-29B, to form the Integrator-PP2A (INTAC) complex.

Its subcellular location is the nucleus. Functionally, component of the integrator complex, a multiprotein complex that terminates RNA polymerase II (Pol II) transcription in the promoter-proximal region of genes. The integrator complex provides a quality checkpoint during transcription elongation by driving premature transcription termination of transcripts that are unfavorably configured for transcriptional elongation: the complex terminates transcription by (1) catalyzing dephosphorylation of the C-terminal domain (CTD) of Pol II subunit Polr2A/Rbp1 and Spt5, and (2) degrading the exiting nascent RNA transcript via endonuclease activity. The integrator complex is also involved in the 3'-end processing of the U7 snRNA, and also the spliceosomal snRNAs U1, U2, U4 and U5. Within the integrator complex, IntS6 acts as a substrate adapter for protein phosphatase 2A (PP2A). This Drosophila melanogaster (Fruit fly) protein is Integrator complex subunit 6.